The sequence spans 545 residues: Probable sucrose-6-phosphate hydrolase (545 aa).

Residues 107–110 (LLND), Q126, 169–170 (FS), 230–231 (RD), and E285 each bind substrate. D110 is a catalytic residue.

The protein belongs to the glycosyl hydrolase 32 family.

It localises to the cytoplasm. The enzyme catalyses Hydrolysis of terminal non-reducing beta-D-fructofuranoside residues in beta-D-fructofuranosides.. Its pathway is glycan biosynthesis; sucrose metabolism. Enables the bacterium to metabolize sucrose as a sole carbon source. This chain is Probable sucrose-6-phosphate hydrolase, found in Psychromonas ingrahamii (strain DSM 17664 / CCUG 51855 / 37).